Reading from the N-terminus, the 1256-residue chain is Pullulanase A (1256 aa).

Positions 1–44 (MRKTPSHTEKKMVYSIRSLKNGTGSVLIGASLVLLAMATPTISS) are cleaved as a signal peptide. Positions 42–117 (ISSDESTPTT…VTTETKAEEP (76 aa)) are disordered. Residues 48-61 (TPTTNEPNNRNTTT) show a composition bias toward low complexity. The segment covering 79 to 90 (DISSPRNANASL) has biased composition (polar residues). Positions 99-111 (TEPTTSTSPVTTE) are enriched in low complexity. Substrate contacts are provided by residues 141–143 (WTW), W153, D199, 248–250 (WYW), W261, K303, and N308. 2 residues coordinate Ca(2+): S646 and Y648. Residues 652–653 (YD) and F728 contribute to the substrate site. Residue D763 is the Nucleophile of the active site. The Proton donor role is filled by E792. Residue W794 participates in substrate binding. Ca(2+) contacts are provided by M813, T816, and D817. D824, R827, and Y834 together coordinate substrate. The Ca(2+) site is built by D867 and D871. Substrate is bound by residues N881, K954, and 974–976 (DSY). D977 serves as a coordination point for Ca(2+). The interval 1126-1224 (SQNGTSHEST…TPDRQAELPN (99 aa)) is disordered. Over residues 1134–1172 (STAEEKPDSTPSKPEHQDPAPEARPDSTKPDAKVADAEN) the composition is skewed to basic and acidic residues. Over residues 1181–1194 (SQAEQPAQEAQASS) the composition is skewed to low complexity. Over residues 1200 to 1210 (QNESVENSSKK) the composition is skewed to polar residues. Positions 1222–1226 (LPNTG) match the LPXTG sorting signal motif. The residue at position 1225 (T1225) is a Pentaglycyl murein peptidoglycan amidated threonine. The propeptide at 1226–1256 (GIKNENKLLFAGISLLALLGLGFLLKNKKEN) is removed by sortase.

The protein belongs to the glycosyl hydrolase 13 family.

It is found in the secreted. It localises to the cell wall. Its subcellular location is the cell surface. The enzyme catalyses Hydrolysis of (1-&gt;6)-alpha-D-glucosidic linkages in pullulan, amylopectin and glycogen, and in the alpha- and beta-limit dextrins of amylopectin and glycogen.. With respect to regulation, inhibited by 4-O-alpha-D-glucopyranosylmoranoline (G1M). In terms of biological role, virulence factor. Involved in the degradation of glycogen of the mammalian host cells. Hydrolyzes the alpha-1,6-branchpoints of glycogen. Hydrolyzes pullulan. Does not hydrolyze dextran. Binds to mouse lung alveolar type II cells that are rich in glycogen stores. Is an alpha-glucan-specific carbohydrate-binding protein, which binds to amylose (pure alpha-(1,4)-linked glucose), amylopectin (alpha-(1,4)-linked glucose with alpha-(1,6) branch points), pullulan (linear polymer of mixed alpha-(1,4)- and alpha-(1,6)-linked glucose) and glycogen (similar to amylopectin with more frequent alpha-(1,6) branch points) in vitro. Does not bind to dextran (a linear polymer of alpha-(1,6)-linked glucose). This is Pullulanase A from Streptococcus pneumoniae serotype 2 (strain D39 / NCTC 7466).